Here is a 122-residue protein sequence, read N- to C-terminus: UPF0102 protein Dred_2035 (122 aa).

Belongs to the UPF0102 family.

The protein is UPF0102 protein Dred_2035 of Desulforamulus reducens (strain ATCC BAA-1160 / DSM 100696 / MI-1) (Desulfotomaculum reducens).